Here is a 153-residue protein sequence, read N- to C-terminus: MTKIKADPDGPEAQAEACSGERTYQELLVNQNPIAQPLASRRLTRKLYKCIKKAVKQKQIRRGVKEVQKFVNKGEKGIMVLAGDTLPIEVYCHLPVMCEDRNLPYVYIPSKTDLGAAAGSKRPTCVIMVKPHDEYQEAYDECLEEVQSLPLPL.

Lys3 is covalently cross-linked (Glycyl lysine isopeptide (Lys-Gly) (interchain with G-Cter in SUMO2)). A Glycyl lysine isopeptide (Lys-Gly) (interchain with G-Cter in SUMO); alternate cross-link involves residue Lys5. Residue Lys5 forms a Glycyl lysine isopeptide (Lys-Gly) (interchain with G-Cter in SUMO1); alternate linkage. A Glycyl lysine isopeptide (Lys-Gly) (interchain with G-Cter in SUMO2); alternate cross-link involves residue Lys5. Phosphoserine is present on Ser19.

It belongs to the eukaryotic ribosomal protein eL8 family. Part of the H/ACA small nucleolar ribonucleoprotein (H/ACA snoRNP) complex, which contains NHP2/NOLA2, GAR1/NOLA1, NOP10/NOLA3, and DKC1/NOLA4, which is presumed to be the catalytic subunit. The complex contains a stable core formed by binding of one or two NOP10-DKC1 heterodimers to NHP2; GAR1 subsequently binds to this core via DKC1. The complex binds a box H/ACA small nucleolar RNA (snoRNA), which may target the specific site of modification within the RNA substrate. During assembly, the complex contains NAF1 instead of GAR1/NOLA1. The complex also interacts with TERC, which contains a 3'-terminal domain related to the box H/ACA snoRNAs. Specific interactions with snoRNAs or TERC are mediated by GAR1 and NHP2. Associates with NOLC1/NOPP140. H/ACA snoRNPs interact with the SMN complex, consisting of SMN1 or SMN2, GEMIN2/SIP1, DDX20/GEMIN3, and GEMIN4. This is mediated by interaction between GAR1 and SMN1 or SMN2. The SMN complex may be required for correct assembly of the H/ACA snoRNP complex. Component of the telomerase holoenzyme complex composed of one molecule of TERT, one molecule of WRAP53/TCAB1, two molecules of H/ACA ribonucleoprotein complex subunits DKC1, NOP10, NHP2 and GAR1, and a telomerase RNA template component (TERC). The telomerase holoenzyme complex is associated with TEP1, SMG6/EST1A and POT1.

Its subcellular location is the nucleus. The protein resides in the nucleolus. It localises to the cajal body. Required for ribosome biogenesis and telomere maintenance. Part of the H/ACA small nucleolar ribonucleoprotein (H/ACA snoRNP) complex, which catalyzes pseudouridylation of rRNA. This involves the isomerization of uridine such that the ribose is subsequently attached to C5, instead of the normal N1. Each rRNA can contain up to 100 pseudouridine ('psi') residues, which may serve to stabilize the conformation of rRNAs. May also be required for correct processing or intranuclear trafficking of TERC, the RNA component of the telomerase reverse transcriptase (TERT) holoenzyme. The sequence is that of H/ACA ribonucleoprotein complex subunit 2 (NHP2) from Pongo abelii (Sumatran orangutan).